Consider the following 348-residue polypeptide: Lysophosphatidic acid receptor 2 (348 aa).

The Extracellular segment spans residues 1–30 (MGQCYYNETIGFFYNNSGKELSLHWRPKDV). N7 and N15 each carry an N-linked (GlcNAc...) asparagine glycan. Residues 31 to 51 (VVVALGLTVSVLVLLTNLLVI) traverse the membrane as a helical segment. The Cytoplasmic segment spans residues 52–66 (AAIASNRRFHQPIYY). A helical membrane pass occupies residues 67–87 (LLGNLAAADLFAGMAYLFLMF). The Extracellular segment spans residues 88-104 (HTGPRTARLSIKGWFLR). The chain crosses the membrane as a helical span at residues 105–124 (QGLLDTSLTASVATLLAIAV). Residues 125–144 (ERHRSVMAVQLHSRLPRGRV) lie on the Cytoplasmic side of the membrane. The chain crosses the membrane as a helical span at residues 145–165 (VTLIVGVWAAALGLGLLPAHF). Over 166–185 (WHCLCDLDSCSRMVPLFSRS) the chain is Extracellular. A helical membrane pass occupies residues 186-206 (YLAAWALSSLLVFLLMVAVYT). Residues 207–239 (RIFFYVRRRVERMAEHVSCHPRYRETTLSLVKT) lie on the Cytoplasmic side of the membrane. The chain crosses the membrane as a helical span at residues 240-260 (VVIILGAFVVCWTPGQVVLLL). The Extracellular portion of the chain corresponds to 261–270 (DGLDCKSCNV). The chain crosses the membrane as a helical span at residues 271–291 (LAVEKYFLLLAEANSLVNAVV). At 292-348 (YSCRDAEMRRTFRRLLCCMCLRWSSHKSARYSASAQTGASTRIMLPENGRPLMDSTL) the chain is on the cytoplasmic side. Residue C308 is the site of S-palmitoyl cysteine attachment. The PDZ-binding signature appears at 345–348 (DSTL).

Belongs to the G-protein coupled receptor 1 family. As to quaternary structure, interacts with SLC9A3R2/NHERF2, MAGI3 and PLCB3. Interacts with RALA and GRK2. In terms of tissue distribution, most abundantly expressed in testes, kidney, and embryonic brain. Other organs also express the transcript, including heart, lung, spleen, thymus, stomach, and adult brain. Several have little or no expression, including liver, small intestine, and skeletal muscle.

Its subcellular location is the cell surface. It is found in the cell membrane. Functionally, receptor for lysophosphatidic acid (LPA), a mediator of diverse cellular activities. Seems to be coupled to the G(i)/G(o), G(12)/G(13), and G(q) families of heteromeric G proteins. Plays a key role in phospholipase C-beta (PLC-beta) signaling pathway Stimulates phospholipase C (PLC) activity in a manner that is independent of RALA activation. The polypeptide is Lysophosphatidic acid receptor 2 (Mus musculus (Mouse)).